The sequence spans 412 residues: Lipid droplet organization protein LDO45 (412 aa).

Residues M1 to N170 lie on the Cytoplasmic side of the membrane. Residues S171 to G191 form a helical membrane-spanning segment. Over D192–K247 the chain is Lumenal. The helical transmembrane segment at V248–T268 threads the bilayer. The Cytoplasmic segment spans residues A269 to F271. The chain crosses the membrane as a helical span at residues F272 to I292. Position 293 (P293) is a topological domain, lumenal. A helical membrane pass occupies residues L294 to M314. Residues S315–S412 are Cytoplasmic-facing. The segment at Q347 to P374 is disordered. Over residues R357–R373 the composition is skewed to polar residues.

In terms of assembly, interacts specifically with the seipin complex FLD1-LDB16. Only a fraction appears to associate with the seipin core components, suggesting that it may be an ancillary subunit of the complex.

It localises to the endoplasmic reticulum membrane. The protein localises to the lipid droplet. Its function is as follows. Involved in lipid droplet (LD) organization. Modulates triglyceride (TAG) storage by reducing DGA1 LD localization. Promotes LD targeting of some proteins, including PDR16. The protein is Lipid droplet organization protein LDO45 of Saccharomyces cerevisiae (strain ATCC 204508 / S288c) (Baker's yeast).